Consider the following 268-residue polypeptide: Small ribosomal subunit protein uS3 (268 aa).

Positions 38–106 (IRKLLATGME…QVQLNILEVK (69 aa)) constitute a KH type-2 domain. The tract at residues 218–268 (VAAPAGDRPRRERPSRPRRSGATGTTATSTEAGRAATATADAPATTEQKEG) is disordered. The span at 237–268 (SGATGTTATSTEAGRAATATADAPATTEQKEG) shows a compositional bias: low complexity.

Belongs to the universal ribosomal protein uS3 family. In terms of assembly, part of the 30S ribosomal subunit. Forms a tight complex with proteins S10 and S14.

In terms of biological role, binds the lower part of the 30S subunit head. Binds mRNA in the 70S ribosome, positioning it for translation. This Rhodococcus jostii (strain RHA1) protein is Small ribosomal subunit protein uS3.